A 161-amino-acid chain; its full sequence is Probable ribosome biogenesis protein RLP24 (161 aa).

Belongs to the eukaryotic ribosomal protein eL24 family. Associated with nucleolar and cytoplasmic pre-60S particles. At the end of biogenesis it dissociates from cytoplasmic pre-60S particles and is likely to be exchanged for its ribosomal homolog, RPL24.

It is found in the nucleus. It localises to the nucleolus. Its function is as follows. Involved in the biogenesis of the 60S ribosomal subunit. Ensures the docking of GTPBP4/NOG1 to pre-60S particles. The polypeptide is Probable ribosome biogenesis protein RLP24 (rsl24d1) (Danio rerio (Zebrafish)).